A 523-amino-acid chain; its full sequence is Putative UDP-glucuronosyltransferase ugt-50 (523 aa).

A signal peptide spans 1-25 (MHYSQMRWMFFCLTALLHGSFIVNA). Asparagine 84, asparagine 248, asparagine 283, and asparagine 487 each carry an N-linked (GlcNAc...) asparagine glycan. The helical transmembrane segment at 490-508 (IIEHNHLDLFFYLCIISLL) threads the bilayer.

The protein belongs to the UDP-glycosyltransferase family.

The protein resides in the membrane. It catalyses the reaction glucuronate acceptor + UDP-alpha-D-glucuronate = acceptor beta-D-glucuronoside + UDP + H(+). This Caenorhabditis elegans protein is Putative UDP-glucuronosyltransferase ugt-50 (ugt-50).